Consider the following 369-residue polypeptide: D-alanine--D-alanine ligase (369 aa).

The 208-residue stretch at 152 to 359 (KKLFAAEGLP…YPSLLATMVE (208 aa)) folds into the ATP-grasp domain. Residue 180–235 (RERLGLPVFVKPARGGSSIGVSRVSSWDELDAAVAAARDHDPKVIVEAAIAGRELE) coordinates ATP. Mg(2+)-binding residues include Asp-314, Glu-326, and Asn-328.

This sequence belongs to the D-alanine--D-alanine ligase family. Mg(2+) is required as a cofactor. The cofactor is Mn(2+).

It is found in the cytoplasm. The enzyme catalyses 2 D-alanine + ATP = D-alanyl-D-alanine + ADP + phosphate + H(+). It participates in cell wall biogenesis; peptidoglycan biosynthesis. Functionally, cell wall formation. This is D-alanine--D-alanine ligase from Mycolicibacterium paratuberculosis (strain ATCC BAA-968 / K-10) (Mycobacterium paratuberculosis).